The sequence spans 145 residues: Large ribosomal subunit protein uL15 (145 aa).

Residues 1-58 form a disordered region; sequence MKLHELSPSEGSRKKRKRVGRGPGSGMGGTSTRGNKGHNQRSGGGTRPGFEGGQMPLH. 2 stretches are compositionally biased toward gly residues: residues 21–31 and 42–52; these read RGPGSGMGGTS and SGGGTRPGFEG.

The protein belongs to the universal ribosomal protein uL15 family. As to quaternary structure, part of the 50S ribosomal subunit.

Functionally, binds to the 23S rRNA. This is Large ribosomal subunit protein uL15 from Desulforapulum autotrophicum (strain ATCC 43914 / DSM 3382 / VKM B-1955 / HRM2) (Desulfobacterium autotrophicum).